A 626-amino-acid polypeptide reads, in one-letter code: Elongation factor 4 (626 aa).

Residues 14–195 (SVIRNFCIIA…QIVMDVPAPH (182 aa)) form the tr-type G domain. Residues 26 to 31 (DHGKST) and 142 to 145 (NKID) each bind GTP. The tract at residues 603–626 (LSTGEDSNDRDTKDKIRAAQKTEG) is disordered. A compositionally biased stretch (basic and acidic residues) spans 609 to 626 (SNDRDTKDKIRAAQKTEG).

This sequence belongs to the TRAFAC class translation factor GTPase superfamily. Classic translation factor GTPase family. LepA subfamily.

It is found in the cell membrane. The catalysed reaction is GTP + H2O = GDP + phosphate + H(+). Required for accurate and efficient protein synthesis under certain stress conditions. May act as a fidelity factor of the translation reaction, by catalyzing a one-codon backward translocation of tRNAs on improperly translocated ribosomes. Back-translocation proceeds from a post-translocation (POST) complex to a pre-translocation (PRE) complex, thus giving elongation factor G a second chance to translocate the tRNAs correctly. Binds to ribosomes in a GTP-dependent manner. The polypeptide is Elongation factor 4 (Bifidobacterium longum (strain DJO10A)).